The primary structure comprises 61 residues: Metallothionein-1D (61 aa).

Residues methionine 1–cysteine 29 form a beta region. 20 residues coordinate a divalent metal cation: cysteine 5, cysteine 7, cysteine 13, cysteine 15, cysteine 19, cysteine 21, cysteine 24, cysteine 26, cysteine 29, cysteine 33, cysteine 34, cysteine 36, cysteine 37, cysteine 41, cysteine 44, cysteine 48, cysteine 50, cysteine 57, cysteine 59, and cysteine 60. Positions lysine 30 to alanine 61 are alpha.

Belongs to the metallothionein superfamily. Type 1 family. As to quaternary structure, monomer.

In terms of biological role, metallothioneins have a high content of cysteine residues that bind various heavy metals; these proteins are transcriptionally regulated by both heavy metals and glucocorticoids. The polypeptide is Metallothionein-1D (MT1D) (Sus scrofa (Pig)).